The primary structure comprises 548 residues: 5-epi-aristolochene synthase 3 (548 aa).

Positions 301, 305, 444, 448, and 452 each coordinate Mg(2+). Positions 301-305 match the DDXXD motif motif; it reads DDTFD.

It belongs to the terpene synthase family. Monomer. Mg(2+) serves as cofactor. Expressed in roots, but not in shoots.

It localises to the cytoplasm. The enzyme catalyses (2E,6E)-farnesyl diphosphate = (+)-5-epi-aristolochene + diphosphate. Its pathway is secondary metabolite biosynthesis; terpenoid biosynthesis. Its function is as follows. Catalyzes the cyclization of trans,trans-farnesyl diphosphate (FPP) to the bicyclic intermediate 5-epi-aristolochene, initial step in the conversion of FPP to the sesquiterpenoid antifungal phytoalexin capsidiol. Produces germacrene A as an enzyme-bound intermediate that is not released by the enzyme, but is further cyclized to produce the bicyclic 5-epi-aristolochene. This Nicotiana attenuata (Coyote tobacco) protein is 5-epi-aristolochene synthase 3.